The sequence spans 202 residues: Josephin-1 (202 aa).

At Ser-15 the chain carries Phosphoserine. A Josephin domain is found at 23 to 202; that stretch reads PPQIYHEKQR…EAHQSWRADV (180 aa). Residue Cys-36 is the Nucleophile of the active site. The Proton acceptor role is filled by His-139.

In terms of assembly, interacts with beta-actin/ACTB. Monoubiquitinated. Ubiquitination activates deubiquitination activity in vitro.

Its subcellular location is the cell membrane. It localises to the cytoplasm. The enzyme catalyses Thiol-dependent hydrolysis of ester, thioester, amide, peptide and isopeptide bonds formed by the C-terminal Gly of ubiquitin (a 76-residue protein attached to proteins as an intracellular targeting signal).. Functionally, deubiquitinates monoubiquitinated probes (in vitro). When ubiquitinated, cleaves 'Lys-63'-linked and 'Lys-48'-linked poly-ubiquitin chains (in vitro), hence may act as a deubiquitinating enzyme. May increase macropinocytosis and suppress clathrin- and caveolae-mediated endocytosis. May enhance membrane dynamics and cell motility independently of its catalytic activity. This is Josephin-1 (JOSD1) from Bos taurus (Bovine).